The sequence spans 248 residues: Large ribosomal subunit protein uL4 (248 aa).

2 disordered regions span residues 48–96 and 210–248; these read GTHK…PVPR and AFSE…RTGA. The span at 233–248 shows a compositional bias: basic and acidic residues; sequence DATKARSSRHDDRTGA.

This sequence belongs to the universal ribosomal protein uL4 family. In terms of assembly, part of the 50S ribosomal subunit.

One of the primary rRNA binding proteins, this protein initially binds near the 5'-end of the 23S rRNA. It is important during the early stages of 50S assembly. It makes multiple contacts with different domains of the 23S rRNA in the assembled 50S subunit and ribosome. In terms of biological role, forms part of the polypeptide exit tunnel. The chain is Large ribosomal subunit protein uL4 from Tropheryma whipplei (strain Twist) (Whipple's bacillus).